We begin with the raw amino-acid sequence, 259 residues long: GEM-like protein 1 (259 aa).

Over residues 1 to 11 the composition is skewed to basic and acidic residues; it reads MSGQENHDHGR. A disordered region spans residues 1 to 79; that stretch reads MSGQENHDHG…PSPAPRNTMD (79 aa). Residues 13–30 are compositionally biased toward low complexity; it reads SSTPAAASEPSKAAAHSS. Residues 138-215 enclose the GRAM domain; the sequence is KVFKQTFDCL…NQLKAVNPST (78 aa).

It belongs to the GEM family. In terms of assembly, interacts with AFH1.

This chain is GEM-like protein 1 (FIP1), found in Arabidopsis thaliana (Mouse-ear cress).